A 479-amino-acid chain; its full sequence is Transcriptional regulator ERG (479 aa).

Residues 34–47 show a composition bias toward polar residues; that stretch reads TASSSSDYGQTSKM. 2 disordered regions span residues 34–56 and 72–92; these read TASSSSDYGQTSKMSPRVPQQDW and PSQVNGSRNSPDECSVAKGGK. 3 positions are modified to phosphoserine: S48, S81, and S96. Residues 113–199 form the PNT domain; the sequence is MPPPNMTTNE…SHLHYLRETP (87 aa). A disordered region spans residues 242–293; it reads QRITTRPDLPYEPPRRSAWTGHGHPTPQSKAAQPSPSTVPKTEDQRPQLDPY. Positions 267-281 are enriched in polar residues; that stretch reads TPQSKAAQPSPSTVP. Residue K282 forms a Glycyl lysine isopeptide (Lys-Gly) (interchain with G-Cter in SUMO2) linkage. A DNA-binding region (ETS) is located at residues 311 to 391; the sequence is IQLWQFLLEL…HGKRYAYKFD (81 aa).

It belongs to the ETS family. In terms of assembly, identified in a IGF2BP1-dependent mRNP granule complex containing untranslated mRNAs. Interacts with SETDB1.

The protein localises to the nucleus. It is found in the cytoplasm. Its function is as follows. Transcriptional regulator. May participate in transcriptional regulation through the recruitment of SETDB1 histone methyltransferase and subsequent modification of local chromatin structure. This is Transcriptional regulator ERG (ERG) from Homo sapiens (Human).